The chain runs to 419 residues: UDP-N-acetylglucosamine 1-carboxyvinyltransferase 2 (419 aa).

Residue 22–23 (KN) coordinates phosphoenolpyruvate. Arg-92 is a binding site for UDP-N-acetyl-alpha-D-glucosamine. Cys-116 functions as the Proton donor in the catalytic mechanism. Cys-116 is subject to 2-(S-cysteinyl)pyruvic acid O-phosphothioketal. UDP-N-acetyl-alpha-D-glucosamine is bound by residues 121-125 (RPIDL), Asp-306, and Ile-328.

It belongs to the EPSP synthase family. MurA subfamily.

The protein resides in the cytoplasm. The catalysed reaction is phosphoenolpyruvate + UDP-N-acetyl-alpha-D-glucosamine = UDP-N-acetyl-3-O-(1-carboxyvinyl)-alpha-D-glucosamine + phosphate. The protein operates within cell wall biogenesis; peptidoglycan biosynthesis. In terms of biological role, cell wall formation. Adds enolpyruvyl to UDP-N-acetylglucosamine. In Streptococcus pneumoniae (strain ATCC BAA-255 / R6), this protein is UDP-N-acetylglucosamine 1-carboxyvinyltransferase 2.